A 439-amino-acid polypeptide reads, in one-letter code: MAEAKIEEIGCEDRISVLPEDLLVVILDLLPTKDVVATMILSKRWLSIWTMVRTLEYTDDMDDESKKSVWWFLNKSLQLHKAPVIDSLCMELGPQCPTTDDVDIGKWVAKAVDCLVMTLTIKLLWSAGPTSLPKSLYSCTSLSELTLSDQILVNVPSSAYLPSLTELELICVVYKDEDSLVSFLSSCPVLEFLFVLRKIDDNVKTFTVKVPSLLELTYKNLCSDVVDNTDRCLVVNAPAVNTCQITDYSLESFSIEDMPCLQDATIDVDEAYHPDDKFLTSFSSVLSLRMHLSDAMVMRCTTINFSRLIKLSIYPYGPDMLETLLRLLGNAPKLKEFLVDYPSLIASQKFVYNPEDLPWSWKQPSHVPECLSSQLEIFEWRDYGDRIIEEEFLTYVLANSKRLKTATISLRLNLEDPELIIEEIKDLPRVSTTSHLLFK.

An F-box domain is found at 12 to 58 (EDRISVLPEDLLVVILDLLPTKDVVATMILSKRWLSIWTMVRTLEYT). The 51-residue stretch at 360–410 (SWKQPSHVPECLSSQLEIFEWRDYGDRIIEEEFLTYVLANSKRLKTATISL) folds into the FBD domain.

This chain is Putative FBD-associated F-box protein At1g05080, found in Arabidopsis thaliana (Mouse-ear cress).